The chain runs to 437 residues: Protein farnesyltransferase subunit beta (437 aa).

5 PFTB repeats span residues 123–164 (ATDV…CIIG), 174–215 (REKL…SLTN), 222–263 (FEGT…VILK), 270–312 (LKSL…PLLH), and 332–374 (QQAL…SIAQ). Residues 248–251 (HGGY) and 291–294 (RCNK) contribute to the (2E,6E)-farnesyl diphosphate site. Zn(2+) is bound by residues Asp-297 and Cys-299. 300–303 (YSFW) is a binding site for (2E,6E)-farnesyl diphosphate. His-362 lines the Zn(2+) pocket. Position 432 is a phosphoserine (Ser-432). Phosphothreonine is present on Thr-436.

This sequence belongs to the protein prenyltransferase subunit beta family. In terms of assembly, heterodimer of FNTA and FNTB. It depends on Zn(2+) as a cofactor.

It carries out the reaction L-cysteinyl-[protein] + (2E,6E)-farnesyl diphosphate = S-(2E,6E)-farnesyl-L-cysteinyl-[protein] + diphosphate. Functionally, essential subunit of the farnesyltransferase complex. Catalyzes the transfer of a farnesyl moiety from farnesyl diphosphate to a cysteine at the fourth position from the C-terminus of several proteins having the C-terminal sequence Cys-aliphatic-aliphatic-X. The sequence is that of Protein farnesyltransferase subunit beta (Fntb) from Rattus norvegicus (Rat).